The following is a 472-amino-acid chain: UDP-N-acetylmuramate--L-alanine ligase (472 aa).

122–128 is an ATP binding site; that stretch reads GSHGKTT.

This sequence belongs to the MurCDEF family.

Its subcellular location is the cytoplasm. It catalyses the reaction UDP-N-acetyl-alpha-D-muramate + L-alanine + ATP = UDP-N-acetyl-alpha-D-muramoyl-L-alanine + ADP + phosphate + H(+). The protein operates within cell wall biogenesis; peptidoglycan biosynthesis. In terms of biological role, cell wall formation. The sequence is that of UDP-N-acetylmuramate--L-alanine ligase from Myxococcus xanthus (strain DK1622).